Here is a 144-residue protein sequence, read N- to C-terminus: 3-dehydroquinate dehydratase (144 aa).

The active-site Proton acceptor is the Tyr24. 3 residues coordinate substrate: Asn76, His82, and Asp89. The active-site Proton donor is His102. Substrate-binding positions include 103-104 (LS) and Arg113.

Belongs to the type-II 3-dehydroquinase family. Homododecamer.

It carries out the reaction 3-dehydroquinate = 3-dehydroshikimate + H2O. It participates in metabolic intermediate biosynthesis; chorismate biosynthesis; chorismate from D-erythrose 4-phosphate and phosphoenolpyruvate: step 3/7. Its function is as follows. Catalyzes a trans-dehydration via an enolate intermediate. The chain is 3-dehydroquinate dehydratase from Nitrosomonas europaea (strain ATCC 19718 / CIP 103999 / KCTC 2705 / NBRC 14298).